The chain runs to 127 residues: Small ribosomal subunit protein uS11 (127 aa).

The protein belongs to the universal ribosomal protein uS11 family. As to quaternary structure, part of the 30S ribosomal subunit. Interacts with proteins S7 and S18. Binds to IF-3.

Located on the platform of the 30S subunit, it bridges several disparate RNA helices of the 16S rRNA. Forms part of the Shine-Dalgarno cleft in the 70S ribosome. The sequence is that of Small ribosomal subunit protein uS11 from Streptococcus pyogenes serotype M1.